The sequence spans 284 residues: P2R1A-PPP2R2A-interacting phosphatase regulator 1 (284 aa).

3 disordered regions span residues 1 to 32 (MAQEKMELDLELPPGSAAAPSDGGGLRRSNSA), 112 to 198 (EESL…PIKR), and 235 to 284 (AHTL…LPID). Low complexity-rich tracts occupy residues 152-164 (SPSLQSLVSSSGL) and 172-184 (PTRRFSSRRSQSP). Over residues 258 to 269 (STGSPVSLSDSR) the composition is skewed to polar residues.

This sequence belongs to the FAM122 family.

It localises to the nucleus. The protein localises to the cytoplasm. Acts as an inhibitor of serine/threonine-protein phosphatase 2A (PP2A) activity. Potentiates ubiquitin-mediated proteasomal degradation of serine/threonine-protein phosphatase 2A catalytic subunit alpha (PPP2CA). Inhibits PP2A-mediated dephosphorylation of WEE1, promoting ubiquitin-mediated proteolysis of WEE1, thereby releasing G2/M checkpoint. The protein is P2R1A-PPP2R2A-interacting phosphatase regulator 1 of Gallus gallus (Chicken).